A 196-amino-acid chain; its full sequence is [1-hydroxy-2-(trimethylamino)ethyl]phosphonate dioxygenase (glycine-betaine-forming) (196 aa).

Tyr30 is a [(1R)-1-hydroxy-2-(trimethylamino)ethyl]phosphonate binding site. Positions 30, 40, 64, and 65 each coordinate Fe cation. In terms of domain architecture, HD spans 37–156 (MAEHMLQGAT…VAEFEKNPNL (120 aa)). Residues His68, His86, His109, Lys113, Ser131, Ser134, and Arg163 each contribute to the [(1R)-1-hydroxy-2-(trimethylamino)ethyl]phosphonate site. Residues His86 and His109 each contribute to the Fe cation site. Asp166 lines the Fe cation pocket.

Fe cation is required as a cofactor.

The catalysed reaction is [(1R)-1-hydroxy-2-(trimethylamino)ethyl]phosphonate + O2 = glycine betaine + phosphate + 2 H(+). In terms of biological role, involved in the degradation of the naturally occurring organophosphonate 2-(trimethylammonio)ethylphosphonate (TMAEP). Catalyzes the O(2)-dependent cleavage of (R)-1-hydroxy-2-(trimethylammonio)ethylphosphonate (OH-TMAEP) to yield glycine betaine and phosphate. Is highly specific for its N-trimethylated substrate. In Leisingera caerulea (Phaeobacter caeruleus), this protein is [1-hydroxy-2-(trimethylamino)ethyl]phosphonate dioxygenase (glycine-betaine-forming).